The following is a 682-amino-acid chain: Potassium-transporting ATPase ATP-binding subunit (682 aa).

4 helical membrane-spanning segments follow: residues 34 to 54, 62 to 82, 219 to 239, and 254 to 274; these read PVMFIVWIGSLLTTCISIAMA, ALFSAAISGWLWITVLFANFA, IALTILLIALTIVFLLATATL, and VLVALLVCLIPTTIGGLLSAI. Aspartate 307 acts as the 4-aspartylphosphate intermediate in catalysis. Residues aspartate 344, glutamate 348, 377 to 384, and lysine 395 contribute to the ATP site; that span reads FTAQSRMS. Residues aspartate 518 and aspartate 522 each contribute to the Mg(2+) site. 3 consecutive transmembrane segments (helical) span residues 588–608, 616–636, and 656–676; these read FAIIPAAFAATYPQLNALNIM, AILSAVIFNALIIVFLIPLAL, and IYGLGGLLVPFIGIKVIDLLL.

It belongs to the cation transport ATPase (P-type) (TC 3.A.3) family. Type IA subfamily. As to quaternary structure, the system is composed of three essential subunits: KdpA, KdpB and KdpC.

The protein resides in the cell inner membrane. It catalyses the reaction K(+)(out) + ATP + H2O = K(+)(in) + ADP + phosphate + H(+). Its function is as follows. Part of the high-affinity ATP-driven potassium transport (or Kdp) system, which catalyzes the hydrolysis of ATP coupled with the electrogenic transport of potassium into the cytoplasm. This subunit is responsible for energy coupling to the transport system and for the release of the potassium ions to the cytoplasm. The sequence is that of Potassium-transporting ATPase ATP-binding subunit from Escherichia coli (strain ATCC 8739 / DSM 1576 / NBRC 3972 / NCIMB 8545 / WDCM 00012 / Crooks).